We begin with the raw amino-acid sequence, 1077 residues long: MKLLYTDINHDMTEILVNQAAHAAEAGWRIFYIAPNSLSFEKERAVLENLPQEASFAITITRFAQLARYFTLNQPNQKESLNDIGLAMIFYRALASFEDGQLKVFGRLKQDASFISQLVDLYKELQTANLSILELKYLHSPEKFEDLLAIFLVVSDLLREGEYDNQSKIAFFTEQVRSGQLDVDLKNTILIVDGFTRFSAEEEALIKSLSSRCQEIIIGAYASQKAYKANFTNGNIYSAGVDFLRYLATTFQTKPEFILSKWESKSGFEMISKNIEGKHDFTNSSHILDDTAKDCITIWECINQKDEVEHVARAIRQKLYQGYRYKDILVLLGDVDSYKLQLSKIFEQYDIPYYFGKAETMAAHPLVHFMDSLSRIKRYRFRAEDVLNLFKTGIYGEISQDDLDYFEAYISYADIKGPKKFFTDFVVGAKKFDLGRLNTIRQSLLTPLESFVKTKKQDGIKTLNQFMFFLTQVGLSDNLSRLVGQMSENEQEKHQEVWKTFTDILEQFQTIFGQEKLNLDEFLSLLNSGMMQAEYRMVPATVDVVTVKSYDLVEPHSNQFVYALGMTQSHFPKIAQNKSLISDIERQLINDANDTDGHFDIMTQENLKKNHFAALSLFNAAKQELVLTIPQLLNESEDQMSPYLVELRDIGVPFNHKGRQSLKEEADNIGNYKALLSRVVDLYRSAIDKEMTKEEQTFWSVAVRYLRRQLTSKGIEIPIITDSLDTVTVSSDVMTRRFPEDDPLKLSSSALTTFYNNQYKYFLQYVLGLEEQDSIHPDMRHHGTYLHRVFEILMKNQGIESFEEKLNSAINKTNQEDVFKSLYSEDAESRYSLEILEDIARATATILRQDSQMTVESEEERFELMIDNTIKINGIIDRIDRLSDGSLGVVDYKSSAQKFDIQKFYNGLSPQLVTYIDAISRDKEVEQKPPIFGAMYLHMQEPRQDLSKIKNLDDLVTKNHQALTYKGLFSEAEKEFLANGKYHLKDSLYSETEIAILQAHNQSLYKKASETIKSGKFLINPYTEDAKTVDGDQFKSITGFEADRHMARARALYKLPAKEKRQGFLTLMQQEEENDDL.

This sequence belongs to the helicase family. AddB/RexB type 2 subfamily. In terms of assembly, heterodimer of AddA and RexB. It depends on Mg(2+) as a cofactor.

Functionally, the heterodimer acts as both an ATP-dependent DNA helicase and an ATP-dependent, dual-direction single-stranded exonuclease. Recognizes the chi site generating a DNA molecule suitable for the initiation of homologous recombination. This subunit has 5' -&gt; 3' nuclease activity but not helicase activity. This Streptococcus agalactiae serotype Ia (strain ATCC 27591 / A909 / CDC SS700) protein is ATP-dependent helicase/deoxyribonuclease subunit B.